A 220-amino-acid chain; its full sequence is Vesicle-associated membrane protein 7 (220 aa).

The Cytoplasmic portion of the chain corresponds to 2-188 (AILFAVVARG…ARAMCMKNLK (187 aa)). Residues 7 to 110 (VVARGTTILA…AMNSEFSSVL (104 aa)) enclose the Longin domain. In terms of domain architecture, v-SNARE coiled-coil homology spans 125-185 (QVAETQAQVD…RNLARAMCMK (61 aa)). A helical; Anchor for type IV membrane protein membrane pass occupies residues 189 to 209 (LTIIIIIVSIVIIYIIVSAAC). Topologically, residues 210-220 (GGLAWPSCVQK) are vesicular.

The protein belongs to the synaptobrevin family.

The protein resides in the cytoplasmic vesicle. It localises to the secretory vesicle membrane. Its subcellular location is the golgi apparatus. It is found in the trans-Golgi network membrane. The protein localises to the late endosome membrane. The protein resides in the lysosome membrane. It localises to the endoplasmic reticulum membrane. Its subcellular location is the phagosome membrane. It is found in the synapse. The protein localises to the synaptosome. Involved in the targeting and/or fusion of transport vesicles to their target membrane during transport of proteins from the early endosome to the lysosome. Required for heterotypic fusion of late endosomes with lysosomes and homotypic lysosomal fusion. Required for calcium regulated lysosomal exocytosis. Involved in the export of chylomicrons from the endoplasmic reticulum to the cis Golgi. Required for focal exocytosis of late endocytic vesicles during phagosome formation. The chain is Vesicle-associated membrane protein 7 from Gallus gallus (Chicken).